Reading from the N-terminus, the 99-residue chain is Cytochrome c-555 (99 aa).

Cys-23, Cys-26, His-27, and Met-73 together coordinate heme c.

Binds 1 heme c group covalently per subunit.

This is Cytochrome c-555 from Prosthecochloris aestuarii.